The following is a 631-amino-acid chain: Nucleoside triphosphatase I (631 aa).

In terms of domain architecture, Helicase ATP-binding spans 42–204; sequence FLGLDSMHSL…TMLVNLLRPG (163 aa). 55–62 provides a ligand contact to ATP; the sequence is HETGVGKT. Residues 141 to 144 carry the DEXH box motif; sequence DECH. The Helicase C-terminal domain maps to 367 to 532; it reads KFIDVCLGIL…EFVQLFRVFK (166 aa). The binding to the cap-specific mRNA (nucleoside-2'-O-)-methyltransferase stretch occupies residues 457-524; sequence DIFILDMTWN…EIIQSKSKEF (68 aa).

Belongs to the helicase family. NPH I subfamily. Monomer. Interacts (via C-terminus) with RAP94/OPG109 (via N-terminus). Interacts with the cap-specific mRNA (nucleoside-2'-O-)-methyltransferase OPG102.

It is found in the virion. It carries out the reaction a ribonucleoside 5'-triphosphate + H2O = a ribonucleoside 5'-diphosphate + phosphate + H(+). Its function is as follows. DNA-dependent ATPase that acts as a 5' to 3' translocase on single-stranded DNA and thereby plays a role in transcription termination of viral early genes. Uses forward translocation in concert with the viral RNA polymerase RAP94/OPG109 subunit and the capping enzyme/VTF to catalyze release of UUUUUNU-containing nascent RNA from the elongation complex. In addition, acts as a positive elongation factor to assist transcription through problematic sequences. In Bos taurus (Bovine), this protein is Nucleoside triphosphatase I (OPG123).